The sequence spans 230 residues: Small ribosomal subunit protein uS3 (230 aa).

A KH type-2 domain is found at 39-107 (VRKFLVEKLQ…PAQINIAEIR (69 aa)).

This sequence belongs to the universal ribosomal protein uS3 family. As to quaternary structure, part of the 30S ribosomal subunit. Forms a tight complex with proteins S10 and S14.

Its function is as follows. Binds the lower part of the 30S subunit head. Binds mRNA in the 70S ribosome, positioning it for translation. This Shewanella baltica (strain OS223) protein is Small ribosomal subunit protein uS3.